A 168-amino-acid polypeptide reads, in one-letter code: N-alpha-acetyltransferase (168 aa).

The N-acetyltransferase domain maps to 13 to 168; sequence YQIRLATLSD…EDAYLMAAPL (156 aa). Tyr38 contacts substrate. His89 is a Zn(2+) binding site. Residues 93-95 and 101-106 each bind acetyl-CoA; these read IAV and KIGVGT. Residues 93 to 95 and 101 to 106 each bind CoA; these read IAV and KIGVGT. Glu128 lines the Zn(2+) pocket. Acetyl-CoA is bound by residues Asn133 and 140-142; that span reads YKK. Asn133 serves as a coordination point for CoA. Position 155 (Tyr155) interacts with substrate.

It belongs to the acetyltransferase family. ARD1 subfamily. As to quaternary structure, homodimer.

It is found in the cytoplasm. The catalysed reaction is N-terminal L-alanyl-[protein] + acetyl-CoA = N-terminal N(alpha)-acetyl-L-alanyl-[protein] + CoA + H(+). It carries out the reaction N-terminal L-seryl-[protein] + acetyl-CoA = N-terminal N(alpha)-acetyl-L-seryl-[protein] + CoA + H(+). It catalyses the reaction N-terminal L-methionyl-L-leucyl-[protein] + acetyl-CoA = N-terminal N(alpha)-acetyl-L-methionyl-L-leucyl-[protein] + CoA + H(+). The enzyme catalyses N-terminal L-methionyl-L-glutamyl-[protein] + acetyl-CoA = N-terminal N(alpha)-acetyl-L-methionyl-L-glutamyl-[protein] + CoA + H(+). Displays alpha (N-terminal) acetyltransferase activity. Catalyzes the covalent attachment of an acetyl moiety from acetyl-CoA to the free alpha-amino group at the N-terminus of a protein. The polypeptide is N-alpha-acetyltransferase (Sulfolobus acidocaldarius (strain ATCC 33909 / DSM 639 / JCM 8929 / NBRC 15157 / NCIMB 11770)).